Here is a 418-residue protein sequence, read N- to C-terminus: Glutamyl-tRNA reductase (418 aa).

Residues T49–R52, S109, E114–Q116, and Q120 each bind substrate. Catalysis depends on C50, which acts as the Nucleophile. Position 189–194 (G189–I194) interacts with NADP(+).

Belongs to the glutamyl-tRNA reductase family. As to quaternary structure, homodimer.

The enzyme catalyses (S)-4-amino-5-oxopentanoate + tRNA(Glu) + NADP(+) = L-glutamyl-tRNA(Glu) + NADPH + H(+). It participates in porphyrin-containing compound metabolism; protoporphyrin-IX biosynthesis; 5-aminolevulinate from L-glutamyl-tRNA(Glu): step 1/2. In terms of biological role, catalyzes the NADPH-dependent reduction of glutamyl-tRNA(Glu) to glutamate 1-semialdehyde (GSA). This Escherichia coli O157:H7 protein is Glutamyl-tRNA reductase.